We begin with the raw amino-acid sequence, 243 residues long: UPF0246 protein Spy49_1742 (243 aa).

It belongs to the UPF0246 family.

The chain is UPF0246 protein Spy49_1742 from Streptococcus pyogenes serotype M49 (strain NZ131).